A 45-amino-acid polypeptide reads, in one-letter code: Large ribosomal subunit protein bL34 (45 aa).

Positions 1-24 (MTKRTFGGTSRKRKRVSGFRVRMR) are disordered. Residues 10-24 (SRKRKRVSGFRVRMR) are compositionally biased toward basic residues.

It belongs to the bacterial ribosomal protein bL34 family.

The sequence is that of Large ribosomal subunit protein bL34 from Prochlorococcus marinus (strain MIT 9303).